A 92-amino-acid chain; its full sequence is Small ribosomal subunit protein uS19c (92 aa).

This sequence belongs to the universal ribosomal protein uS19 family.

It localises to the plastid. Its subcellular location is the chloroplast. Protein S19 forms a complex with S13 that binds strongly to the 16S ribosomal RNA. This Daucus carota (Wild carrot) protein is Small ribosomal subunit protein uS19c.